The sequence spans 516 residues: Maturase K (516 aa).

This sequence belongs to the intron maturase 2 family. MatK subfamily.

The protein localises to the plastid. The protein resides in the chloroplast. In terms of biological role, usually encoded in the trnK tRNA gene intron. Probably assists in splicing its own and other chloroplast group II introns. The sequence is that of Maturase K from Chara vulgaris (Common stonewort).